Reading from the N-terminus, the 315-residue chain is Ribosomal RNA small subunit methyltransferase H (315 aa).

S-adenosyl-L-methionine contacts are provided by residues 32 to 34, aspartate 52, phenylalanine 78, aspartate 100, and glutamine 107; that span reads GGH.

The protein belongs to the methyltransferase superfamily. RsmH family.

Its subcellular location is the cytoplasm. It carries out the reaction cytidine(1402) in 16S rRNA + S-adenosyl-L-methionine = N(4)-methylcytidine(1402) in 16S rRNA + S-adenosyl-L-homocysteine + H(+). Specifically methylates the N4 position of cytidine in position 1402 (C1402) of 16S rRNA. The chain is Ribosomal RNA small subunit methyltransferase H from Psychromonas ingrahamii (strain DSM 17664 / CCUG 51855 / 37).